Reading from the N-terminus, the 225-residue chain is Probable CDP-diacylglycerol--inositol 3-phosphatidyltransferase 2 (225 aa).

Helical transmembrane passes span Pro6–Leu26 and Ile29–Phe49. Mg(2+) is bound by residues Asp52 and Asp55. Residues Gly56, Arg60, and Ser66 each coordinate a CDP-1,2-diacyl-sn-glycerol. Mg(2+) is bound by residues Asp73 and Asp77. The active-site Proton acceptor is Asp77. The next 3 membrane-spanning stretches (helical) occupy residues Leu84–Leu104, Met143–Ala163, and Leu184–Ile204.

It belongs to the CDP-alcohol phosphatidyltransferase class-I family. Mg(2+) serves as cofactor. Requires Mn(2+) as cofactor.

Its subcellular location is the membrane. It carries out the reaction a CDP-1,2-diacyl-sn-glycerol + myo-inositol = a 1,2-diacyl-sn-glycero-3-phospho-(1D-myo-inositol) + CMP + H(+). Functionally, catalyzes the biosynthesis of phosphatidylinositol (PtdIns) as well as PtdIns:inositol exchange reaction. May thus act to reduce an excessive cellular PtdIns content. The exchange activity is due to the reverse reaction of PtdIns synthase and is dependent on CMP, which is tightly bound to the enzyme. The sequence is that of Probable CDP-diacylglycerol--inositol 3-phosphatidyltransferase 2 (PIS2) from Arabidopsis thaliana (Mouse-ear cress).